The sequence spans 120 residues: Large ribosomal subunit protein uL18 (120 aa).

It belongs to the universal ribosomal protein uL18 family. In terms of assembly, part of the 50S ribosomal subunit; part of the 5S rRNA/L5/L18/L25 subcomplex. Contacts the 5S and 23S rRNAs.

In terms of biological role, this is one of the proteins that bind and probably mediate the attachment of the 5S RNA into the large ribosomal subunit, where it forms part of the central protuberance. The chain is Large ribosomal subunit protein uL18 from Methylocella silvestris (strain DSM 15510 / CIP 108128 / LMG 27833 / NCIMB 13906 / BL2).